The chain runs to 621 residues: Phosphoenolpyruvate carboxykinase [GTP] (621 aa).

Residues arginine 82 and tyrosine 220–glycine 222 each bind substrate. Lysine 229 and histidine 249 together coordinate Mn(2+). A substrate-binding site is contributed by serine 271. Glutamine 272–asparagine 277 contributes to the GTP binding site. Cysteine 273 is a catalytic residue. Position 296 (aspartate 296) interacts with Mn(2+). Asparagine 386–arginine 388 lines the substrate pocket. Residues arginine 388, arginine 419, and phenylalanine 514 to asparagine 517 contribute to the GTP site.

The protein belongs to the phosphoenolpyruvate carboxykinase [GTP] family. In terms of assembly, monomer. Mn(2+) serves as cofactor.

The protein resides in the cytoplasm. It catalyses the reaction oxaloacetate + GTP = phosphoenolpyruvate + GDP + CO2. It participates in carbohydrate biosynthesis; gluconeogenesis. Functionally, catalyzes the conversion of oxaloacetate (OAA) to phosphoenolpyruvate (PEP), the rate-limiting step in the metabolic pathway that produces glucose from lactate and other precursors derived from the citric acid cycle. This is Phosphoenolpyruvate carboxykinase [GTP] from Corynebacterium kroppenstedtii (strain DSM 44385 / JCM 11950 / CIP 105744 / CCUG 35717).